A 400-amino-acid polypeptide reads, in one-letter code: Exodeoxyribonuclease 7 large subunit (400 aa).

This sequence belongs to the XseA family. Heterooligomer composed of large and small subunits.

It localises to the cytoplasm. The enzyme catalyses Exonucleolytic cleavage in either 5'- to 3'- or 3'- to 5'-direction to yield nucleoside 5'-phosphates.. Bidirectionally degrades single-stranded DNA into large acid-insoluble oligonucleotides, which are then degraded further into small acid-soluble oligonucleotides. The sequence is that of Exodeoxyribonuclease 7 large subunit from Clostridium perfringens (strain SM101 / Type A).